The primary structure comprises 293 residues: 4-hydroxy-tetrahydrodipicolinate synthase (293 aa).

T45 provides a ligand contact to pyruvate. The active-site Proton donor/acceptor is Y133. Residue K162 is the Schiff-base intermediate with substrate of the active site. Residue I204 participates in pyruvate binding.

This sequence belongs to the DapA family. As to quaternary structure, homotetramer; dimer of dimers.

It is found in the cytoplasm. The enzyme catalyses L-aspartate 4-semialdehyde + pyruvate = (2S,4S)-4-hydroxy-2,3,4,5-tetrahydrodipicolinate + H2O + H(+). The protein operates within amino-acid biosynthesis; L-lysine biosynthesis via DAP pathway; (S)-tetrahydrodipicolinate from L-aspartate: step 3/4. Catalyzes the condensation of (S)-aspartate-beta-semialdehyde [(S)-ASA] and pyruvate to 4-hydroxy-tetrahydrodipicolinate (HTPA). In Mesorhizobium japonicum (strain LMG 29417 / CECT 9101 / MAFF 303099) (Mesorhizobium loti (strain MAFF 303099)), this protein is 4-hydroxy-tetrahydrodipicolinate synthase.